We begin with the raw amino-acid sequence, 350 residues long: Transmembrane protein 185B (350 aa).

A run of 7 helical transmembrane segments spans residues 16–36, 41–61, 81–101, 111–131, 168–188, 211–231, and 240–260; these read LIYT…DGII, WAVF…ASVG, FKAM…EVLV, FWLL…AACV, WLVV…VVLY, VTMA…EVLL, and TFSY…LMAT.

The protein belongs to the TMEM185 family.

It localises to the membrane. The protein is Transmembrane protein 185B (TMEM185B) of Homo sapiens (Human).